We begin with the raw amino-acid sequence, 339 residues long: Protoheme IX farnesyltransferase (339 aa).

Residues 1–27 (MTVADPRLTDAPAHSRTSLLGRRRGGR) are disordered. 9 consecutive transmembrane segments (helical) span residues 45-65 (IVELLLITTIPVMLFAAGGLP), 67-87 (GWLILTTFVGGALAAGCANTL), 117-136 (ALVFATVLGIASTAIFVAFV), 140-159 (SAALALGAILLYVVGYTLLL), 165-185 (QNIVWGGVAGCMQVLIGWTAV), 191-211 (WAPFVLFGVIFLWTPPHYWPL), 236-256 (VSRQIVLYTIAMVLCSLLLVP), 257-277 (LGGAGVVYGAAALVLGIGFLV), and 309-329 (PMGVFHGSITYLTLLSAAVAV).

Belongs to the UbiA prenyltransferase family. Protoheme IX farnesyltransferase subfamily.

The protein localises to the cell membrane. It catalyses the reaction heme b + (2E,6E)-farnesyl diphosphate + H2O = Fe(II)-heme o + diphosphate. The protein operates within porphyrin-containing compound metabolism; heme O biosynthesis; heme O from protoheme: step 1/1. Functionally, converts heme B (protoheme IX) to heme O by substitution of the vinyl group on carbon 2 of heme B porphyrin ring with a hydroxyethyl farnesyl side group. The polypeptide is Protoheme IX farnesyltransferase (Kineococcus radiotolerans (strain ATCC BAA-149 / DSM 14245 / SRS30216)).